The chain runs to 453 residues: Septin-10 (453 aa).

The tract at residues 18–43 is disordered; it reads KTAHTSSQVSDHEQKQKDSPRSLTMS. The span at 27–37 shows a compositional bias: basic and acidic residues; that stretch reads SDHEQKQKDSP. Residues 62-328 enclose the Septin-type G domain; the sequence is QGFCFNILCV…ELYRRRKLEE (267 aa). Positions 72–79 are G1 motif; that stretch reads GETGIGKS. Residues 72–79, G127, 208–216, G262, and R277 contribute to the GTP site; these read GETGIGKS and KADAISKTE. The G3 motif stretch occupies residues 124–127; sequence NTVG. The interval 207-210 is G4 motif; the sequence is AKAD. The tract at residues 433-453 is disordered; that stretch reads TFMTPGSNLRKDKDRKNSNFM. Basic and acidic residues predominate over residues 441-453; it reads LRKDKDRKNSNFM.

The protein belongs to the TRAFAC class TrmE-Era-EngA-EngB-Septin-like GTPase superfamily. Septin GTPase family. In terms of assembly, septins polymerize into heterooligomeric protein complexes that form filaments, and can associate with cellular membranes, actin filaments and microtubules. GTPase activity is required for filament formation. Interacts with ADGB. In terms of processing, proteolytically cleaved in vitro in a calmodulin-dependent manner.

The protein resides in the cytoplasm. It localises to the cytoskeleton. It is found in the cell projection. Its subcellular location is the cilium. The protein localises to the flagellum. Its function is as follows. Filament-forming cytoskeletal GTPase. May play a role in cytokinesis (Potential). This Bos taurus (Bovine) protein is Septin-10.